The chain runs to 386 residues: Succinate--CoA ligase [ADP-forming] subunit beta (386 aa).

The ATP-grasp domain occupies 9–244; it reads KDLLTSYAIP…PSQENVRDVL (236 aa). ATP is bound by residues K46, 53–55, V102, and E107; that span reads GRG. Residues N199 and D213 each coordinate Mg(2+). Substrate-binding positions include N264 and 321-323; that span reads GIM.

It belongs to the succinate/malate CoA ligase beta subunit family. In terms of assembly, heterotetramer of two alpha and two beta subunits. Mg(2+) is required as a cofactor.

The catalysed reaction is succinate + ATP + CoA = succinyl-CoA + ADP + phosphate. It catalyses the reaction GTP + succinate + CoA = succinyl-CoA + GDP + phosphate. It functions in the pathway carbohydrate metabolism; tricarboxylic acid cycle; succinate from succinyl-CoA (ligase route): step 1/1. Its function is as follows. Succinyl-CoA synthetase functions in the citric acid cycle (TCA), coupling the hydrolysis of succinyl-CoA to the synthesis of either ATP or GTP and thus represents the only step of substrate-level phosphorylation in the TCA. The beta subunit provides nucleotide specificity of the enzyme and binds the substrate succinate, while the binding sites for coenzyme A and phosphate are found in the alpha subunit. This chain is Succinate--CoA ligase [ADP-forming] subunit beta, found in Chlamydia abortus (strain DSM 27085 / S26/3) (Chlamydophila abortus).